Consider the following 231-residue polypeptide: 7-cyano-7-deazaguanine synthase (231 aa).

ATP is bound at residue 8-18 (FSGGQDSTTCL). Residues Cys-188, Cys-197, Cys-200, and Cys-203 each coordinate Zn(2+).

This sequence belongs to the QueC family. It depends on Zn(2+) as a cofactor.

It carries out the reaction 7-carboxy-7-deazaguanine + NH4(+) + ATP = 7-cyano-7-deazaguanine + ADP + phosphate + H2O + H(+). Its pathway is purine metabolism; 7-cyano-7-deazaguanine biosynthesis. In terms of biological role, catalyzes the ATP-dependent conversion of 7-carboxy-7-deazaguanine (CDG) to 7-cyano-7-deazaguanine (preQ(0)). In Shigella dysenteriae serotype 1 (strain Sd197), this protein is 7-cyano-7-deazaguanine synthase.